A 1174-amino-acid chain; its full sequence is Pesticidal crystal protein Cry1Fa (1174 aa).

This sequence belongs to the delta endotoxin family.

Functionally, promotes colloidosmotic lysis by binding to the midgut epithelial cells of many lepidopteran larvae. The chain is Pesticidal crystal protein Cry1Fa (cry1Fa) from Bacillus thuringiensis subsp. aizawai.